The chain runs to 244 residues: NAD-dependent protein deacetylase (244 aa).

One can recognise a Deacetylase sirtuin-type domain in the interval 1 to 244; the sequence is MTGEQLAHWI…LSAVQRAVMP (244 aa). NAD(+) contacts are provided by Ala22, Thr26, Phe33, Arg34, Gln103, Ile105, Asp106, and His121. Nicotinamide is bound at residue Phe33. Nicotinamide is bound by residues Ile105 and Asp106. His121 functions as the Proton acceptor in the catalytic mechanism. Cys129, Cys132, Cys150, and Cys152 together coordinate Zn(2+). Residues Thr190, Ser191, Asn213, and Leu231 each coordinate NAD(+).

This sequence belongs to the sirtuin family. Class U subfamily. It depends on Zn(2+) as a cofactor.

The protein resides in the cytoplasm. It carries out the reaction N(6)-acetyl-L-lysyl-[protein] + NAD(+) + H2O = 2''-O-acetyl-ADP-D-ribose + nicotinamide + L-lysyl-[protein]. In terms of biological role, NAD-dependent protein deacetylase which modulates the activities of several enzymes which are inactive in their acetylated form. The chain is NAD-dependent protein deacetylase from Cutibacterium acnes (strain DSM 16379 / KPA171202) (Propionibacterium acnes).